A 110-amino-acid chain; its full sequence is MSVVIRLARAGTKKRPVYHVVVADSRFPRDGRFIERLGHFNPLLPKDNEARLKLDLDKVKAWVAKGAQPSDRVARFLDAAGVMKREARNNPEKAVPRKERKAAAEAAAKK.

Residues 87–110 form a disordered region; it reads ARNNPEKAVPRKERKAAAEAAAKK.

It belongs to the bacterial ribosomal protein bS16 family.

This Rhodopseudomonas palustris (strain BisA53) protein is Small ribosomal subunit protein bS16.